The following is a 777-amino-acid chain: Degenerin unc-8 (777 aa).

Residues 1–128 (MSPLLTWNLI…VATSSFFGRY (128 aa)) are Cytoplasmic-facing. A helical transmembrane segment spans residues 129–149 (VWAALFMCMLMAFLLQTYWTM). At 150–689 (SEYLQYRTII…KETAGYTLVN (540 aa)) the chain is on the extracellular side. N274, N319, N357, N411, N453, N533, and N597 each carry an N-linked (GlcNAc...) asparagine glycan. A helical membrane pass occupies residues 690–710 (LFSDFGGNIGLWIGFSVITFA). Over 711–777 (EFAELFCEIC…NESTKELMSK (67 aa)) the chain is Cytoplasmic. The tract at residues 752-777 (QRSPKKSQPGEDEVSTNESTKELMSK) is disordered.

The protein belongs to the amiloride-sensitive sodium channel (TC 1.A.6) family.

It localises to the membrane. Its function is as follows. Sodium permeable non-voltage-sensitive ion channel. Involved in the activity-dependent removal of selected presynaptic proteins, such as synaptobrevin snb-1, and Ras-related rab-3, in the remodeling of GABAergic motor neurons. This chain is Degenerin unc-8, found in Caenorhabditis elegans.